A 1551-amino-acid chain; its full sequence is Pentafunctional AROM polypeptide (1551 aa).

Positions 1-379 (MSIEKVPILG…YQLKAHQVSK (379 aa)) are 3-dehydroquinate synthase. Residues 42–44 (DTN), 80–83 (ENNK), 111–113 (GGV), and D116 contribute to the NAD(+) site. R127 provides a ligand contact to 7-phospho-2-dehydro-3-deoxy-D-arabino-heptonate. Residue 136-137 (TT) participates in NAD(+) binding. Residues D143 and K149 each contribute to the 7-phospho-2-dehydro-3-deoxy-D-arabino-heptonate site. Residue K158 coordinates NAD(+). 7-phospho-2-dehydro-3-deoxy-D-arabino-heptonate is bound at residue N159. NAD(+)-binding positions include 176-179 (FLET) and N187. Position 191 (E191) interacts with Zn(2+). 7-phospho-2-dehydro-3-deoxy-D-arabino-heptonate-binding positions include 191-194 (EVVK) and K243. E253 serves as the catalytic Proton acceptor; for 3-dehydroquinate synthase activity. 7-phospho-2-dehydro-3-deoxy-D-arabino-heptonate contacts are provided by residues 257 to 261 (RNLLN) and H264. A Zn(2+)-binding site is contributed by H264. H268 (proton acceptor; for 3-dehydroquinate synthase activity) is an active-site residue. 7-phospho-2-dehydro-3-deoxy-D-arabino-heptonate-binding residues include H280 and K351. H280 lines the Zn(2+) pocket. Residues 392 to 838 (VHPFTNPPKE…WDILHSKFKI (447 aa)) form an EPSP synthase region. Residues 858–1048 (DKSIIVIGMR…VPAGRSAAVV (191 aa)) are shikimate kinase. 865 to 872 (GMRGTGKS) is a binding site for ATP. The segment at 1049–1258 (LTSPDLNEVV…NDEEFLTIGE (210 aa)) is 3-dehydroquinase. R1194 acts as the Schiff-base intermediate with substrate; for 3-dehydroquinate dehydratase activity in catalysis. The segment at 1271-1551 (AKKFWVIGSP…EIIHRAVVEE (281 aa)) is shikimate dehydrogenase.

It in the N-terminal section; belongs to the sugar phosphate cyclases superfamily. Dehydroquinate synthase family. The protein in the 2nd section; belongs to the EPSP synthase family. This sequence in the 3rd section; belongs to the shikimate kinase family. In the 4th section; belongs to the type-I 3-dehydroquinase family. It in the C-terminal section; belongs to the shikimate dehydrogenase family. Homodimer. Requires Zn(2+) as cofactor.

It localises to the cytoplasm. The catalysed reaction is 7-phospho-2-dehydro-3-deoxy-D-arabino-heptonate = 3-dehydroquinate + phosphate. It carries out the reaction 3-dehydroquinate = 3-dehydroshikimate + H2O. It catalyses the reaction shikimate + NADP(+) = 3-dehydroshikimate + NADPH + H(+). The enzyme catalyses shikimate + ATP = 3-phosphoshikimate + ADP + H(+). The catalysed reaction is 3-phosphoshikimate + phosphoenolpyruvate = 5-O-(1-carboxyvinyl)-3-phosphoshikimate + phosphate. It functions in the pathway metabolic intermediate biosynthesis; chorismate biosynthesis; chorismate from D-erythrose 4-phosphate and phosphoenolpyruvate: step 2/7. It participates in metabolic intermediate biosynthesis; chorismate biosynthesis; chorismate from D-erythrose 4-phosphate and phosphoenolpyruvate: step 3/7. The protein operates within metabolic intermediate biosynthesis; chorismate biosynthesis; chorismate from D-erythrose 4-phosphate and phosphoenolpyruvate: step 4/7. Its pathway is metabolic intermediate biosynthesis; chorismate biosynthesis; chorismate from D-erythrose 4-phosphate and phosphoenolpyruvate: step 5/7. It functions in the pathway metabolic intermediate biosynthesis; chorismate biosynthesis; chorismate from D-erythrose 4-phosphate and phosphoenolpyruvate: step 6/7. Its function is as follows. The AROM polypeptide catalyzes 5 consecutive enzymatic reactions in prechorismate polyaromatic amino acid biosynthesis. This chain is Pentafunctional AROM polypeptide, found in Candida albicans (strain SC5314 / ATCC MYA-2876) (Yeast).